A 499-amino-acid chain; its full sequence is Glycerol kinase (499 aa).

Threonine 13 is a binding site for ADP. Threonine 13, threonine 14, and serine 15 together coordinate ATP. Residue threonine 13 coordinates sn-glycerol 3-phosphate. Arginine 17 provides a ligand contact to ADP. Residues arginine 83, glutamate 84, tyrosine 135, and aspartate 244 each coordinate sn-glycerol 3-phosphate. Residues arginine 83, glutamate 84, tyrosine 135, aspartate 244, and glutamine 245 each coordinate glycerol. Threonine 266 and glycine 309 together coordinate ADP. ATP is bound by residues threonine 266, glycine 309, glutamine 313, and glycine 410. ADP is bound by residues glycine 410 and asparagine 414.

The protein belongs to the FGGY kinase family. Homotetramer and homodimer (in equilibrium).

The catalysed reaction is glycerol + ATP = sn-glycerol 3-phosphate + ADP + H(+). It participates in polyol metabolism; glycerol degradation via glycerol kinase pathway; sn-glycerol 3-phosphate from glycerol: step 1/1. Activated by phosphorylation and inhibited by fructose 1,6-bisphosphate (FBP). Its function is as follows. Key enzyme in the regulation of glycerol uptake and metabolism. Catalyzes the phosphorylation of glycerol to yield sn-glycerol 3-phosphate. The chain is Glycerol kinase from Brevibacillus brevis (strain 47 / JCM 6285 / NBRC 100599).